We begin with the raw amino-acid sequence, 606 residues long: ATP-dependent rRNA helicase spb4 (606 aa).

Positions Met1–Ala29 match the Q motif motif. In terms of domain architecture, Helicase ATP-binding spans Ile32–Arg213. Ala45–Thr52 is an ATP binding site. Positions Asp161 to Asp164 match the DEAD box motif. Residues Cys246 to Leu400 enclose the Helicase C-terminal domain. Positions Lys521–Asp574 are disordered. Residues Lys521–Ser601 adopt a coiled-coil conformation. The span at Arg529–Lys539 shows a compositional bias: basic residues.

The protein belongs to the DEAD box helicase family. DDX55/SPB4 subfamily. Component of pre-60S ribosomal complexes.

The protein localises to the nucleus. It is found in the nucleolus. The enzyme catalyses ATP + H2O = ADP + phosphate + H(+). In terms of biological role, ATP-binding RNA helicase involved in the biogenesis of 60S ribosomal subunits. Binds 90S pre-ribosomal particles and dissociates from pre-60S ribosomal particles after processing of 27SB pre-rRNA. Required for the normal formation of 18S rRNA through the processing of pre-rRNAs at sites A0, A1 and A2, and the normal formation of 25S and 5.8S rRNAs through the processing of pre-rRNAs at sites C1 and C2. This Schizosaccharomyces pombe (strain 972 / ATCC 24843) (Fission yeast) protein is ATP-dependent rRNA helicase spb4.